A 151-amino-acid polypeptide reads, in one-letter code: Actin-depolymerizing factor 10 (151 aa).

The region spanning 15–149 (PAWIEVPEKS…DLEVLRGRAN (135 aa)) is the ADF-H domain.

The protein belongs to the actin-binding proteins ADF family.

Actin-depolymerizing protein. Severs actin filaments (F-actin) and binds to actin monomers. The sequence is that of Actin-depolymerizing factor 10 (ADF10) from Oryza sativa subsp. japonica (Rice).